The chain runs to 93 residues: HIG1 domain family member 1A, mitochondrial (93 aa).

Residues 1 to 93 (MSTDTGVSLP…YREFWAKPKP (93 aa)) form the HIG1 domain. S2 carries the post-translational modification N-acetylserine. S8 is modified (phosphoserine). 2 helical membrane passes run 26–46 (EAPF…YGLY) and 60–80 (LIHM…VGMG).

In terms of assembly, associates with cytochrome c oxidase (COX, complex IV); proposed complex component. Also associates with respiratory chain supercomplexes.

It localises to the mitochondrion membrane. The protein resides in the mitochondrion inner membrane. In terms of biological role, proposed subunit of cytochrome c oxidase (COX, complex IV), which is the terminal component of the mitochondrial respiratory chain that catalyzes the reduction of oxygen to water. May play a role in the assembly of respiratory supercomplexes. This Homo sapiens (Human) protein is HIG1 domain family member 1A, mitochondrial (HIGD1A).